Reading from the N-terminus, the 152-residue chain is Probable flagellum biosynthesis repressor protein FlbT (152 aa).

It belongs to the FlbT family.

Functionally, has a post-transcriptional repressor function in flagellum biogenesis. Associates with the 5'-UTR of fljK mRNA and promotes its degradation. In Brucella anthropi (strain ATCC 49188 / DSM 6882 / CCUG 24695 / JCM 21032 / LMG 3331 / NBRC 15819 / NCTC 12168 / Alc 37) (Ochrobactrum anthropi), this protein is Probable flagellum biosynthesis repressor protein FlbT.